Reading from the N-terminus, the 598-residue chain is NADH-quinone oxidoreductase subunit C/D (598 aa).

The interval 1 to 190 (MSIFTQEVSA…EAFSLDDERL (190 aa)) is NADH dehydrogenase I subunit C. Positions 214–598 (DYLFLNLGPN…IDFVMADVDR (385 aa)) are NADH dehydrogenase I subunit D.

In the N-terminal section; belongs to the complex I 30 kDa subunit family. This sequence in the C-terminal section; belongs to the complex I 49 kDa subunit family. NDH-1 is composed of 13 different subunits. Subunits NuoB, CD, E, F, and G constitute the peripheral sector of the complex.

It is found in the cell inner membrane. The catalysed reaction is a quinone + NADH + 5 H(+)(in) = a quinol + NAD(+) + 4 H(+)(out). NDH-1 shuttles electrons from NADH, via FMN and iron-sulfur (Fe-S) centers, to quinones in the respiratory chain. The immediate electron acceptor for the enzyme in this species is believed to be ubiquinone. Couples the redox reaction to proton translocation (for every two electrons transferred, four hydrogen ions are translocated across the cytoplasmic membrane), and thus conserves the redox energy in a proton gradient. This is NADH-quinone oxidoreductase subunit C/D from Shewanella woodyi (strain ATCC 51908 / MS32).